We begin with the raw amino-acid sequence, 199 residues long: Dephospho-CoA kinase (199 aa).

One can recognise a DPCK domain in the interval 3–199 (TLGVTGGIGS…ELYWAVTGGQ (197 aa)). 11–16 (GSGKTT) is a binding site for ATP.

The protein belongs to the CoaE family.

It is found in the cytoplasm. The enzyme catalyses 3'-dephospho-CoA + ATP = ADP + CoA + H(+). It participates in cofactor biosynthesis; coenzyme A biosynthesis; CoA from (R)-pantothenate: step 5/5. Catalyzes the phosphorylation of the 3'-hydroxyl group of dephosphocoenzyme A to form coenzyme A. In Salinibacter ruber (strain DSM 13855 / M31), this protein is Dephospho-CoA kinase.